A 212-amino-acid chain; its full sequence is Large ribosomal subunit protein uL1 (212 aa).

The protein belongs to the universal ribosomal protein uL1 family. As to quaternary structure, part of the 50S ribosomal subunit.

In terms of biological role, binds directly to 23S rRNA. Probably involved in E site tRNA release. Its function is as follows. Protein L1 is also a translational repressor protein, it controls the translation of its operon by binding to its mRNA. This chain is Large ribosomal subunit protein uL1, found in Methanothrix thermoacetophila (strain DSM 6194 / JCM 14653 / NBRC 101360 / PT) (Methanosaeta thermophila).